The sequence spans 273 residues: Undecaprenyl-diphosphatase (273 aa).

8 helical membrane passes run 7 to 27 (LWIA…PVSS), 45 to 65 (AETF…VMFW), 89 to 109 (LTLI…LLLH), 115 to 135 (LFNP…LIAA), 152 to 171 (TYRQ…WPGF), 189 to 209 (YAAS…ATGL), 221 to 241 (ADFP…LIAI), and 253 to 273 (FIPF…LFVL).

This sequence belongs to the UppP family.

It localises to the cell inner membrane. The catalysed reaction is di-trans,octa-cis-undecaprenyl diphosphate + H2O = di-trans,octa-cis-undecaprenyl phosphate + phosphate + H(+). In terms of biological role, catalyzes the dephosphorylation of undecaprenyl diphosphate (UPP). Confers resistance to bacitracin. This chain is Undecaprenyl-diphosphatase, found in Erwinia tasmaniensis (strain DSM 17950 / CFBP 7177 / CIP 109463 / NCPPB 4357 / Et1/99).